The chain runs to 291 residues: Ribosomal RNA small subunit methyltransferase H (291 aa).

S-adenosyl-L-methionine contacts are provided by residues 31 to 33 (GGY), Asp49, Phe76, Asp97, and Gln104.

The protein belongs to the methyltransferase superfamily. RsmH family.

The protein resides in the cytoplasm. The catalysed reaction is cytidine(1402) in 16S rRNA + S-adenosyl-L-methionine = N(4)-methylcytidine(1402) in 16S rRNA + S-adenosyl-L-homocysteine + H(+). In terms of biological role, specifically methylates the N4 position of cytidine in position 1402 (C1402) of 16S rRNA. This Anaplasma marginale (strain St. Maries) protein is Ribosomal RNA small subunit methyltransferase H.